Consider the following 129-residue polypeptide: MWIIYKEFSFEAAHQLPHHEGKCRRLHGHSFRGRVYVASDRLKTTGSETGMVMDFSVLKAHLDPLVKNHLDHYYLNDSLGLESPTSEAIAAWIFAKLEEAGVPGLHSVEVLETCTSAARYFSPRLSPLL.

Histidine 14 is a binding site for Zn(2+). Catalysis depends on cysteine 23, which acts as the Proton acceptor. Residues histidine 27 and histidine 29 each coordinate Zn(2+). Catalysis depends on charge relay system residues histidine 72 and glutamate 112.

This sequence belongs to the PTPS family. QueD subfamily. Requires Zn(2+) as cofactor.

It catalyses the reaction 7,8-dihydroneopterin 3'-triphosphate + H2O = 6-carboxy-5,6,7,8-tetrahydropterin + triphosphate + acetaldehyde + 2 H(+). The protein operates within purine metabolism; 7-cyano-7-deazaguanine biosynthesis. In terms of biological role, catalyzes the conversion of 7,8-dihydroneopterin triphosphate (H2NTP) to 6-carboxy-5,6,7,8-tetrahydropterin (CPH4) and acetaldehyde. The chain is 6-carboxy-5,6,7,8-tetrahydropterin synthase (queD) from Synechocystis sp. (strain ATCC 27184 / PCC 6803 / Kazusa).